The chain runs to 118 residues: Co-chaperonin GroES (118 aa).

Belongs to the GroES chaperonin family. As to quaternary structure, heptamer of 7 subunits arranged in a ring. Interacts with the chaperonin GroEL.

Its subcellular location is the cytoplasm. In terms of biological role, together with the chaperonin GroEL, plays an essential role in assisting protein folding. The GroEL-GroES system forms a nano-cage that allows encapsulation of the non-native substrate proteins and provides a physical environment optimized to promote and accelerate protein folding. GroES binds to the apical surface of the GroEL ring, thereby capping the opening of the GroEL channel. The protein is Co-chaperonin GroES of Helicobacter pylori (strain Shi470).